The primary structure comprises 613 residues: DNA mismatch repair protein MutL (613 aa).

This sequence belongs to the DNA mismatch repair MutL/HexB family.

In terms of biological role, this protein is involved in the repair of mismatches in DNA. It is required for dam-dependent methyl-directed DNA mismatch repair. May act as a 'molecular matchmaker', a protein that promotes the formation of a stable complex between two or more DNA-binding proteins in an ATP-dependent manner without itself being part of a final effector complex. This is DNA mismatch repair protein MutL from Flavobacterium psychrophilum (strain ATCC 49511 / DSM 21280 / CIP 103535 / JIP02/86).